We begin with the raw amino-acid sequence, 231 residues long: Ribose-5-phosphate isomerase A (231 aa).

Substrate-binding positions include T32 to T35, D85 to D88, and K98 to G101. Residue E107 is the Proton acceptor of the active site. Residue K125 coordinates substrate.

It belongs to the ribose 5-phosphate isomerase family. As to quaternary structure, homodimer.

It carries out the reaction aldehydo-D-ribose 5-phosphate = D-ribulose 5-phosphate. Its pathway is carbohydrate degradation; pentose phosphate pathway; D-ribose 5-phosphate from D-ribulose 5-phosphate (non-oxidative stage): step 1/1. Catalyzes the reversible conversion of ribose-5-phosphate to ribulose 5-phosphate. This is Ribose-5-phosphate isomerase A from Burkholderia mallei (strain NCTC 10247).